Consider the following 508-residue polypeptide: Photosystem II CP47 reaction center protein (508 aa).

6 helical membrane-spanning segments follow: residues 21-36 (SVHI…WAGS), 101-115 (IVFS…IWHW), 140-156 (GIHL…FGAF), 203-218 (IAAG…FHLS), 237-252 (VLSS…AFVV), and 457-472 (SFAL…HGAR).

It belongs to the PsbB/PsbC family. PsbB subfamily. As to quaternary structure, PSII is composed of 1 copy each of membrane proteins PsbA, PsbB, PsbC, PsbD, PsbE, PsbF, PsbH, PsbI, PsbJ, PsbK, PsbL, PsbM, PsbT, PsbX, PsbY, PsbZ, Psb30/Ycf12, at least 3 peripheral proteins of the oxygen-evolving complex and a large number of cofactors. It forms dimeric complexes. Binds multiple chlorophylls. PSII binds additional chlorophylls, carotenoids and specific lipids. is required as a cofactor.

It is found in the plastid. The protein localises to the chloroplast thylakoid membrane. One of the components of the core complex of photosystem II (PSII). It binds chlorophyll and helps catalyze the primary light-induced photochemical processes of PSII. PSII is a light-driven water:plastoquinone oxidoreductase, using light energy to abstract electrons from H(2)O, generating O(2) and a proton gradient subsequently used for ATP formation. The polypeptide is Photosystem II CP47 reaction center protein (Aethionema cordifolium (Lebanon stonecress)).